The sequence spans 188 residues: Large ribosomal subunit protein uL5 (188 aa).

It belongs to the universal ribosomal protein uL5 family. As to quaternary structure, part of the 50S ribosomal subunit; contacts the 5S rRNA and probably tRNA. Forms a bridge to the 30S subunit in the 70S ribosome.

In terms of biological role, this is one of the proteins that bind and probably mediate the attachment of the 5S RNA into the large ribosomal subunit, where it forms part of the central protuberance. In the 70S ribosome it contacts protein S13 of the 30S subunit (bridge B1b), connecting the 2 subunits; this bridge is implicated in subunit movement. May contact the P site tRNA; the 5S rRNA and some of its associated proteins might help stabilize positioning of ribosome-bound tRNAs. In Pyrococcus abyssi (strain GE5 / Orsay), this protein is Large ribosomal subunit protein uL5.